The chain runs to 425 residues: Polyribonucleotide 5'-hydroxyl-kinase Clp1 (425 aa).

Residues glutamate 22, lysine 62, and 124-129 contribute to the ATP site; that span reads DVGKST.

The protein belongs to the Clp1 family. Clp1 subfamily. As to quaternary structure, component of the tRNA splicing endonuclease complex, composed of CLP1, TSEN2, TSEN15, TSEN34 and TSEN54. Component of pre-mRNA cleavage complex II (CF-II). Also associates with numerous components of the pre-mRNA cleavage complex I (CF-I/CFIm), including NUDT21, CPSF2, CPSF3, CPSF6 and CPSF7. Interacts with CSTF2 and SYMPK. Mg(2+) is required as a cofactor. Requires Mn(2+) as cofactor. The cofactor is Ni(2+).

The protein localises to the nucleus. It catalyses the reaction a 5'-end dephospho-2'-deoxyribonucleoside-DNA + ATP = a 5'-end 5'-phospho-2'-deoxyribonucleoside-DNA + ADP + H(+). The enzyme catalyses a 5'-end dephospho-ribonucleoside-RNA + ATP = a 5'-end 5'-phospho-ribonucleoside-RNA + ADP + H(+). In terms of biological role, polynucleotide kinase that can phosphorylate the 5'-hydroxyl groups of double-stranded RNA (dsRNA), single-stranded RNA (ssRNA), double-stranded DNA (dsDNA) and double-stranded DNA:RNA hybrids. dsRNA is phosphorylated more efficiently than dsDNA, and the RNA component of a DNA:RNA hybrid is phosphorylated more efficiently than the DNA component. Plays a key role in both tRNA splicing and mRNA 3'-end formation. Component of the tRNA splicing endonuclease complex: phosphorylates the 5'-terminus of the tRNA 3'-exon during tRNA splicing; this phosphorylation event is a prerequisite for the subsequent ligation of the two exon halves and the production of a mature tRNA. Its role in tRNA splicing and maturation is required for cerebellar development. Component of the pre-mRNA cleavage complex II (CF-II), which seems to be required for mRNA 3'-end formation. Also phosphorylates the 5'-terminus of exogenously introduced short interfering RNAs (siRNAs), which is a necessary prerequisite for their incorporation into the RNA-induced silencing complex (RISC). However, endogenous siRNAs and microRNAs (miRNAs) that are produced by the cleavage of dsRNA precursors by DICER1 already contain a 5'-phosphate group, so this protein may be dispensible for normal RNA-mediated gene silencing. The sequence is that of Polyribonucleotide 5'-hydroxyl-kinase Clp1 from Bos taurus (Bovine).